The sequence spans 283 residues: Isochorismatase domain-containing protein 1 (283 aa).

Belongs to the isochorismatase family.

The chain is Isochorismatase domain-containing protein 1 (isoc1) from Danio rerio (Zebrafish).